The sequence spans 367 residues: Probable 7-methylxanthine methyltransferase 2 (367 aa).

Tyrosine 20 serves as a coordination point for S-adenosyl-L-homocysteine. Threonine 27 lines the theobromine pocket. The S-adenosyl-L-homocysteine site is built by cysteine 64, glutamine 69, aspartate 101, leucine 102, serine 134, and phenylalanine 135. Positions 152, 155, and 156 each coordinate theobromine. Mg(2+)-binding residues include asparagine 172, aspartate 258, phenylalanine 260, and asparagine 261. Residue phenylalanine 313 participates in theobromine binding.

This sequence belongs to the methyltransferase superfamily. Type-7 methyltransferase family. It depends on Mg(2+) as a cofactor.

It carries out the reaction 7-methylxanthine + S-adenosyl-L-methionine = theobromine + S-adenosyl-L-homocysteine + H(+). Its pathway is alkaloid biosynthesis. In terms of biological role, involved in the biosynthesis of theobromine. The sequence is that of Probable 7-methylxanthine methyltransferase 2 from Theobroma cacao (Cacao).